Reading from the N-terminus, the 193-residue chain is Holliday junction branch migration complex subunit RuvA (193 aa).

The segment at 1–63 is domain I; it reads MIHHLKGQLI…EDSHTLYGFA (63 aa). The domain II stretch occupies residues 64-142; that stretch reads EKSEREIFRL…KVLGDDEVFV (79 aa). Residues 143-145 form a flexible linker region; sequence SQS. The interval 145-193 is domain III; it reads SNTNKEEALSALEILGYNRRQAGKVVEKILKEDPESTVESIIKMALKKL.

This sequence belongs to the RuvA family. In terms of assembly, homotetramer. Forms an RuvA(8)-RuvB(12)-Holliday junction (HJ) complex. HJ DNA is sandwiched between 2 RuvA tetramers; dsDNA enters through RuvA and exits via RuvB. An RuvB hexamer assembles on each DNA strand where it exits the tetramer. Each RuvB hexamer is contacted by two RuvA subunits (via domain III) on 2 adjacent RuvB subunits; this complex drives branch migration. In the full resolvosome a probable DNA-RuvA(4)-RuvB(12)-RuvC(2) complex forms which resolves the HJ.

Its subcellular location is the cytoplasm. In terms of biological role, the RuvA-RuvB-RuvC complex processes Holliday junction (HJ) DNA during genetic recombination and DNA repair, while the RuvA-RuvB complex plays an important role in the rescue of blocked DNA replication forks via replication fork reversal (RFR). RuvA specifically binds to HJ cruciform DNA, conferring on it an open structure. The RuvB hexamer acts as an ATP-dependent pump, pulling dsDNA into and through the RuvAB complex. HJ branch migration allows RuvC to scan DNA until it finds its consensus sequence, where it cleaves and resolves the cruciform DNA. This chain is Holliday junction branch migration complex subunit RuvA, found in Christiangramia forsetii (strain DSM 17595 / CGMCC 1.15422 / KT0803) (Gramella forsetii).